Here is an 862-residue protein sequence, read N- to C-terminus: Squamosa promoter-binding-like protein 1 (862 aa).

The segment at 55 to 98 (KRRRVSPEDDDGEECINAATTNGDDGQISGQRGRSSEDEMPRQG) is disordered. Over residues 72 to 87 (AATTNGDDGQISGQRG) the composition is skewed to polar residues. The SBP-type zinc-finger motif lies at 104–181 (GPCCQVDGCT…AQHNRRRRKV (78 aa)). 8 residues coordinate Zn(2+): cysteine 107, cysteine 112, cysteine 129, histidine 132, cysteine 148, cysteine 151, histidine 155, and cysteine 167. The Bipartite nuclear localization signal motif lies at 164-180 (KKSCRSRLAQHNRRRRK).

Ubiquitous.

It is found in the nucleus. Functionally, trans-acting factor that binds specifically to the consensus nucleotide sequence 5'-TNCGTACAA-3'. The chain is Squamosa promoter-binding-like protein 1 (SPL1) from Oryza sativa subsp. japonica (Rice).